The sequence spans 90 residues: FEARFRFVEEIIRWGADARTDGHHAVVRGIRQLSSAPVWSSDIRAGAGLVLAGLVADGVTEVYDVFHIDRGYPLFVENLQSLGAEVERVS.

This sequence belongs to the EPSP synthase family. MurA subfamily.

Its subcellular location is the cytoplasm. It carries out the reaction phosphoenolpyruvate + UDP-N-acetyl-alpha-D-glucosamine = UDP-N-acetyl-3-O-(1-carboxyvinyl)-alpha-D-glucosamine + phosphate. It functions in the pathway cell wall biogenesis; peptidoglycan biosynthesis. In terms of biological role, cell wall formation. Adds enolpyruvyl to UDP-N-acetylglucosamine. This Mycobacteroides chelonae (Mycobacterium chelonae) protein is UDP-N-acetylglucosamine 1-carboxyvinyltransferase (murA).